The sequence spans 199 residues: dITP/XTP pyrophosphatase (199 aa).

9–14 (TGNKGK) contacts substrate. Mg(2+) contacts are provided by glutamate 41 and aspartate 70. Aspartate 70 functions as the Proton acceptor in the catalytic mechanism. Residues serine 71, 157–160 (FGYD), lysine 180, and 185–186 (HR) each bind substrate.

This sequence belongs to the HAM1 NTPase family. As to quaternary structure, homodimer. Mg(2+) serves as cofactor.

The catalysed reaction is XTP + H2O = XMP + diphosphate + H(+). It catalyses the reaction dITP + H2O = dIMP + diphosphate + H(+). The enzyme catalyses ITP + H2O = IMP + diphosphate + H(+). Pyrophosphatase that catalyzes the hydrolysis of nucleoside triphosphates to their monophosphate derivatives, with a high preference for the non-canonical purine nucleotides XTP (xanthosine triphosphate), dITP (deoxyinosine triphosphate) and ITP. Seems to function as a house-cleaning enzyme that removes non-canonical purine nucleotides from the nucleotide pool, thus preventing their incorporation into DNA/RNA and avoiding chromosomal lesions. This is dITP/XTP pyrophosphatase from Mannheimia succiniciproducens (strain KCTC 0769BP / MBEL55E).